We begin with the raw amino-acid sequence, 999 residues long: Lysosomal alpha-mannosidase (999 aa).

The disordered stretch occupies residues 1 to 25 (MVGDARPSGVRAGGCRGAVGSRTSS). Positions 1 to 50 (MVGDARPSGVRAGGCRGAVGSRTSSRALRPPLPPLSSLFVLFLAAPCAWA) are cleaved as a signal peptide. Zn(2+) is bound by residues H73 and D75. N134 carries an N-linked (GlcNAc...) asparagine glycan. Residue D197 participates in Zn(2+) binding. D197 (nucleophile) is an active-site residue. C269 and C274 are joined by a disulfide. N-linked (GlcNAc...) asparagine glycosylation occurs at N369. A Zn(2+)-binding site is contributed by H448. An intrachain disulfide couples C495 to C503. N-linked (GlcNAc...) asparagine glycosylation occurs at N499. The propeptide occupies 591–621 (SRDLVIQNEYLRARFDPNTGLLMELENLEQN). 5 N-linked (GlcNAc...) asparagine glycosylation sites follow: N634, N640, N681, N755, and N919.

Belongs to the glycosyl hydrolase 38 family. As to quaternary structure, homodimer. Zn(2+) serves as cofactor. Post-translationally, processed into 5 peptides of 35/38 kDa (A), 11/13 kDa (B) and 22 kDa (C), 38 kDa (D) and 13/15 kDa (E). The A, B and C peptides are disulfide-linked into a 67 kDa complex. In terms of processing, heavily glycosylated. Some sugar chains are of the high-mannose type.

It is found in the lysosome. The enzyme catalyses Hydrolysis of terminal, non-reducing alpha-D-mannose residues in alpha-D-mannosides.. Its function is as follows. Necessary for the catabolism of N-linked carbohydrates released during glycoprotein turnover. This is Lysosomal alpha-mannosidase (MAN2B1) from Bos taurus (Bovine).